The chain runs to 507 residues: Monocarboxylate transporter 9 (507 aa).

Residues 1-12 (MVYRKPPDGGWG) are Extracellular-facing. The chain crosses the membrane as a helical span at residues 13 to 33 (WVIVIVSFFTQFLCYGSPLAV). Residues 34–52 (GVLYLEWLDAFGEGKGKTA) lie on the Cytoplasmic side of the membrane. The helical transmembrane segment at 53-73 (WVGSLANGIGLLASPVCSICV) threads the bilayer. The Extracellular segment spans residues 74-79 (SSFGAR). Residues 80–100 (PVAIFSGFMVAGGLMMSSFAP) form a helical membrane-spanning segment. Over 101-102 (NI) the chain is Cytoplasmic. Residues 103 to 123 (YFLYLSYGIVVGLGCGLLYNA) traverse the membrane as a helical segment. The Extracellular portion of the chain corresponds to 124 to 136 (TVTITCQYFDKRR). A helical membrane pass occupies residues 137-157 (GLALGLISTGSSVGLFIYAAL). The Cytoplasmic segment spans residues 158–163 (QRELIE). A helical transmembrane segment spans residues 164-184 (LYGLDGCLLIVGALSLNILAC). Residues 185–302 (GSLMRPLESS…EETVVLFKNR (118 aa)) are Extracellular-facing. The helical transmembrane segment at 303-323 (VFSALFFAILLFDIGGFPPSL) threads the bilayer. The Cytoplasmic segment spans residues 324 to 340 (LMEDIARSANINEEDYH). A helical transmembrane segment spans residues 341-361 (MPLVSIIGIMTAIGKLILGIL). Residues 362-369 (ADFKWVNT) lie on the Extracellular side of the membrane. The chain crosses the membrane as a helical span at residues 370-390 (LYLYVLTLLMMGAALLAIPFA). The Cytoplasmic portion of the chain corresponds to 391 to 395 (RSYFT). The helical transmembrane segment at 396 to 416 (LAVLSGILGFLTGNWSIFPYV) threads the bilayer. The Extracellular portion of the chain corresponds to 417 to 430 (TTKTVGIEKLTHAY). The helical transmembrane segment at 431 to 451 (GILMFFAGLGNSLGPPIVGWF) threads the bilayer. The Cytoplasmic segment spans residues 452–460 (YDWTQEYDT). The helical transmembrane segment at 461–481 (AFYFSGFCVLLGGFLLLLAAL) threads the bilayer. The Extracellular portion of the chain corresponds to 482 to 507 (PCWNACTDRSSKLPPNTYSYKVASSA).

Belongs to the major facilitator superfamily. Monocarboxylate porter (TC 2.A.1.13) family.

The protein localises to the cell membrane. It carries out the reaction creatine(in) = creatine(out). The catalysed reaction is (R)-carnitine(in) = (R)-carnitine(out). Its function is as follows. Extracellular pH-and Na(+)-sensitive low-affinity creatine transporter. Also functions as a pH-independent carnitine efflux transporter. The sequence is that of Monocarboxylate transporter 9 (SLC16A9) from Gallus gallus (Chicken).